The chain runs to 414 residues: 5-aminolevulinate synthase (414 aa).

Residues Arg-22, Ser-133, and Lys-152 each coordinate substrate. Residues Ser-185, His-213, and Thr-241 each contribute to the pyridoxal 5'-phosphate site. Lys-244 is an active-site residue. Position 244 is an N6-(pyridoxal phosphate)lysine (Lys-244). Thr-273 and Thr-274 together coordinate pyridoxal 5'-phosphate. Thr-359 is a binding site for substrate.

This sequence belongs to the class-II pyridoxal-phosphate-dependent aminotransferase family. As to quaternary structure, homodimer. Requires pyridoxal 5'-phosphate as cofactor.

The catalysed reaction is succinyl-CoA + glycine + H(+) = 5-aminolevulinate + CO2 + CoA. The protein operates within porphyrin-containing compound metabolism; protoporphyrin-IX biosynthesis; 5-aminolevulinate from glycine: step 1/1. This Rickettsia conorii (strain ATCC VR-613 / Malish 7) protein is 5-aminolevulinate synthase (hemA).